The chain runs to 354 residues: Uroporphyrinogen decarboxylase (354 aa).

Residues 27–31 (RQAGR), aspartate 77, tyrosine 154, threonine 209, and histidine 327 each bind substrate.

It belongs to the uroporphyrinogen decarboxylase family. As to quaternary structure, homodimer.

The protein localises to the cytoplasm. It catalyses the reaction uroporphyrinogen III + 4 H(+) = coproporphyrinogen III + 4 CO2. It participates in porphyrin-containing compound metabolism; protoporphyrin-IX biosynthesis; coproporphyrinogen-III from 5-aminolevulinate: step 4/4. Catalyzes the decarboxylation of four acetate groups of uroporphyrinogen-III to yield coproporphyrinogen-III. The chain is Uroporphyrinogen decarboxylase from Actinobacillus succinogenes (strain ATCC 55618 / DSM 22257 / CCUG 43843 / 130Z).